An 862-amino-acid chain; its full sequence is Piwi-like protein 1 (862 aa).

A compositionally biased stretch (basic residues) spans 1-13; it reads MTGRARARARGRA. Positions 1-48 are disordered; the sequence is MTGRARARARGRARGQETVQHVGAAASQQPGYIPPRPQQSPTEGDLVG. The residue at position 14 (R14) is an Omega-N-methylarginine; by PRMT5; alternate. Symmetric dimethylarginine; by PRMT5; alternate is present on R14. R49 carries the omega-N-methylarginine; by PRMT5 modification. The residue at position 53 (R53) is an Omega-N-methylarginine; alternate. The residue at position 53 (R53) is a Symmetric dimethylarginine; alternate. Positions 218–225 match the D-box motif; that stretch reads RRLLKIMN. The 114-residue stretch at 279–392 folds into the PAZ domain; sequence TVLDFMFNLY…LIPELCYLTG (114 aa). The tract at residues 317 to 319 is required for binding 2'-O-methylated 3'-end of piRNAs; sequence TYR. Residue R371 is modified to Omega-N-methylarginine; by PRMT5. An MID region region spans residues 480 to 616; the sequence is SKETRGAPLI…LQMNCKMGGE (137 aa). The region spanning 556-848 is the Piwi domain; that stretch reads IVVCLLSSNR…LAFLVGQSIH (293 aa). Residues D633, E671, D703, and H837 contribute to the active site.

Belongs to the argonaute family. Piwi subfamily. Interacts (via Piwi domain) with DICER1, suggesting that it forms ribonucleoprotein RISC complexes; this interaction is regulated by HSP90AB1 activity. Interacts with MAEL, KIF17, PABPC1, PRMT5 and WDR77. Interacts (when methylated on arginine residues) with TDRD1, TDRKH/TDRD2, RNF17/TDRD4, TDRD6, TDRD7 and TDRD9. Interacts with CLOCK. Interacts with MOV10L1. Interacts with ANAPC10; interaction oly takes place following piRNA-binding. Interacts with RNF8; leading to sequester RNF8 in the cytoplasm. Interacts with Tex19.1 and, probably, Tex19.2. It depends on Mg(2+) as a cofactor. In terms of processing, ubiquitinated by the anaphase promoting complex/cyclosome (APC/C) in late spermatids, leading to its degradation. Ubiquitination only takes place following piRNA-binding in adult testis. Ubiquitination and degradation in late spermatogenesis by APC/C is probably required to release RNF8 from the cytoplasm and promote histone to protamine exchange by RNF8. Post-translationally, arginine methylation by PRMT5 is required for the interaction with Tudor domain-containing protein (TDRD1, TDRKH/TDRD2, RNF17/TDRD4, TDRD6, TDRD7 and TDRD9) and subsequent localization to the meiotic nuage, also named P granule. In terms of tissue distribution, expressed in brain. Expressed in testis, specifically in spermatocytes (at protein level). Only detected in germ lineage cells of adult testis. Expressed in male gonads 2 weeks after birth at the initiation of spermatogenesis, but not expressed in female gonads.

The protein localises to the cytoplasm. Endoribonuclease that plays a central role in postnatal germ cells by repressing transposable elements and preventing their mobilization, which is essential for the germline integrity. Acts via the piRNA metabolic process, which mediates the repression of transposable elements during meiosis by forming complexes composed of piRNAs and Piwi proteins and governs the methylation and subsequent repression of transposons. Directly binds methylated piRNAs, a class of 24 to 30 nucleotide RNAs that are generated by a Dicer-independent mechanism and are primarily derived from transposons and other repeated sequence elements. Strongly prefers a uridine in the first position of their guide (g1U preference, also named 1U-bias). Not involved in the piRNA amplification loop, also named ping-pong amplification cycle. Acts as an endoribonuclease that cleaves transposon messenger RNAs. Besides their function in transposable elements repression, piRNAs are probably involved in other processes during meiosis such as translation regulation. Probable component of some RISC complex, which mediates RNA cleavage and translational silencing. Also plays a role in the formation of chromatoid bodies and is required for some miRNAs stability. Required to sequester RNF8 in the cytoplasm until late spermatogenesis; RNF8 being released upon ubiquitination and degradation of PIWIL1. The protein is Piwi-like protein 1 of Mus musculus (Mouse).